The chain runs to 231 residues: Demethylmenaquinone methyltransferase (231 aa).

Residues Thr-62, Asp-80, 100–101 (DA), and Ser-117 each bind S-adenosyl-L-methionine.

It belongs to the class I-like SAM-binding methyltransferase superfamily. MenG/UbiE family.

The enzyme catalyses a 2-demethylmenaquinol + S-adenosyl-L-methionine = a menaquinol + S-adenosyl-L-homocysteine + H(+). The protein operates within quinol/quinone metabolism; menaquinone biosynthesis; menaquinol from 1,4-dihydroxy-2-naphthoate: step 2/2. Its function is as follows. Methyltransferase required for the conversion of demethylmenaquinol (DMKH2) to menaquinol (MKH2). This chain is Demethylmenaquinone methyltransferase, found in Mycobacterium marinum (strain ATCC BAA-535 / M).